The primary structure comprises 497 residues: Protein DETOXIFICATION 25 (497 aa).

12 consecutive transmembrane segments (helical) span residues 43 to 63 (LPSTLFRVMSFGCVVVAQAFI), 70 to 90 (GLAAYALLQSTFIRFIYGIMA), 121 to 141 (IVDTFIATLFVPFIVLAGPIL), 157 to 177 (IYPWVIPYLYSIVFTMTMQMY), 186 to 206 (IIGILSTLALVLDIAATWWCV), 216 to 236 (ALLGLNISSWSVAIAEFVYVF), 261 to 281 (LSISSGFMLCLEYWYMSIIVL), 291 to 311 (IAISAFSICQYIYSWEMNICF), 339 to 359 (VVLVVSAVIGVICSALCLAFG), 381 to 401 (IVLSISILFNIIQPILSGVAI), 416 to 436 (SYYAIGVPLGVLLVYVFNFGI), and 438 to 458 (GLWSGMLAGVGIQTLILCYVI).

It belongs to the multi antimicrobial extrusion (MATE) (TC 2.A.66.1) family.

The protein localises to the membrane. This Arabidopsis thaliana (Mouse-ear cress) protein is Protein DETOXIFICATION 25.